The primary structure comprises 282 residues: MKLVMVSGRSGSGKSVVLRVLEDLGYYCVDNLPLPLMDTLLEQLKGSTDLVAISVDVRNMPEQDKEFLKQLANLPKGTELLSFFLDSSDEVLLKRYSETRRLHPLSRTKTSLKEAIEHERELLEPVSKMVDHYIDTSNLNIYDLSDKIREILLGSVDKELVINFESFGFKYGMPVEADFMFDVRFLPNPHWEPELRPMTGLDEPVQLFLSQQPTVNKFIWQIENLLATWLPHLERNNRSYLTIAIGCTGGQHRSVYVTEQLAKLFANSKHKIQARHRELSDD.

8-15 (GRSGSGKS) is a binding site for ATP. 56–59 (DVRN) contacts GTP.

The protein belongs to the RapZ-like family.

In terms of biological role, displays ATPase and GTPase activities. This Shewanella violacea protein is Nucleotide-binding protein in ptsN-ptsO intergenic region.